Consider the following 742-residue polypeptide: Phosphoribosylformylglycinamidine synthase subunit PurL (742 aa).

Residue His-53 is part of the active site. The ATP site is built by Tyr-56 and Lys-95. Glu-97 provides a ligand contact to Mg(2+). Residues 98-101 (SHNH) and Arg-120 each bind substrate. Residue His-99 is the Proton acceptor of the active site. Residue Asp-121 participates in Mg(2+) binding. Residue Gln-244 participates in substrate binding. Asp-274 serves as a coordination point for Mg(2+). Position 318-320 (318-320 (ESQ)) interacts with substrate. ATP is bound by residues Asp-501 and Gly-538. Residue Asn-539 coordinates Mg(2+). Ser-541 is a binding site for substrate.

The protein belongs to the FGAMS family. Monomer. Part of the FGAM synthase complex composed of 1 PurL, 1 PurQ and 2 PurS subunits.

The protein localises to the cytoplasm. It catalyses the reaction N(2)-formyl-N(1)-(5-phospho-beta-D-ribosyl)glycinamide + L-glutamine + ATP + H2O = 2-formamido-N(1)-(5-O-phospho-beta-D-ribosyl)acetamidine + L-glutamate + ADP + phosphate + H(+). Its pathway is purine metabolism; IMP biosynthesis via de novo pathway; 5-amino-1-(5-phospho-D-ribosyl)imidazole from N(2)-formyl-N(1)-(5-phospho-D-ribosyl)glycinamide: step 1/2. Its function is as follows. Part of the phosphoribosylformylglycinamidine synthase complex involved in the purines biosynthetic pathway. Catalyzes the ATP-dependent conversion of formylglycinamide ribonucleotide (FGAR) and glutamine to yield formylglycinamidine ribonucleotide (FGAM) and glutamate. The FGAM synthase complex is composed of three subunits. PurQ produces an ammonia molecule by converting glutamine to glutamate. PurL transfers the ammonia molecule to FGAR to form FGAM in an ATP-dependent manner. PurS interacts with PurQ and PurL and is thought to assist in the transfer of the ammonia molecule from PurQ to PurL. In Limosilactobacillus reuteri (strain DSM 20016) (Lactobacillus reuteri), this protein is Phosphoribosylformylglycinamidine synthase subunit PurL.